Consider the following 169-residue polypeptide: NAD(P)H-quinone oxidoreductase subunit J, chloroplastic (169 aa).

Belongs to the complex I 30 kDa subunit family. NDH is composed of at least 16 different subunits, 5 of which are encoded in the nucleus.

It localises to the plastid. The protein localises to the chloroplast thylakoid membrane. It catalyses the reaction a plastoquinone + NADH + (n+1) H(+)(in) = a plastoquinol + NAD(+) + n H(+)(out). The catalysed reaction is a plastoquinone + NADPH + (n+1) H(+)(in) = a plastoquinol + NADP(+) + n H(+)(out). NDH shuttles electrons from NAD(P)H:plastoquinone, via FMN and iron-sulfur (Fe-S) centers, to quinones in the photosynthetic chain and possibly in a chloroplast respiratory chain. The immediate electron acceptor for the enzyme in this species is believed to be plastoquinone. Couples the redox reaction to proton translocation, and thus conserves the redox energy in a proton gradient. This is NAD(P)H-quinone oxidoreductase subunit J, chloroplastic from Anthoceros angustus (Hornwort).